We begin with the raw amino-acid sequence, 785 residues long: Protein PHTF2 (785 aa).

A PHTF domain is found at 46 to 191 (IQCLIGAYDQ…VHCQIVSTRT (146 aa)). The next 2 helical transmembrane spans lie at 136 to 156 (VIFF…VLFC) and 164 to 184 (IPLT…TVHC). Disordered regions lie at residues 190–239 (RTPK…GTST) and 304–401 (RPEE…PESE). The span at 200–209 (GKRRRKLRKA) shows a compositional bias: basic residues. Residues 210–219 (AHLEVHREGD) show a composition bias toward basic and acidic residues. 2 stretches are compositionally biased toward polar residues: residues 220–239 (GSST…GTST) and 309–333 (AWNT…VSDE). Asn-329 is a glycosylation site (N-linked (GlcNAc...) asparagine). The span at 359 to 369 (RNRKSHHYKKH) shows a compositional bias: basic residues. Low complexity predominate over residues 378 to 390 (SGTSCSSRCSSSR). Residues 391-400 (QDSESARPES) are compositionally biased toward basic and acidic residues. The next 4 membrane-spanning stretches (helical) occupy residues 497 to 517 (IGYQ…PFVF), 553 to 573 (VIIS…LLCV), 634 to 654 (VIVS…CAQL), and 668 to 688 (WELV…VTLG). N-linked (GlcNAc...) asparagine glycosylation is found at Asn-697 and Asn-756. The chain crosses the membrane as a helical span at residues 760 to 780 (VVILSAVSGVISDLLGFNLKL).

Its subcellular location is the membrane. The chain is Protein PHTF2 (PHTF2) from Homo sapiens (Human).